A 507-amino-acid polypeptide reads, in one-letter code: MIRDKNPQRVNRPSYGSISSLPSPAPQPEPSRNTYLSEKIPIPSTEQLLWVLLWATVLGLLCQRLAARLGVVTGKDLGEICHLYYPKVPRILLWLTIELAIVGSDMQEVIGTAISFNLLSAGRIPLWGGVLITIVDTFFFLFLDNYGLRKLEAFFGFLVTIMALTFGYEYVVARPSQGALLKGLFLPSCPGCGQPELLQAVGIVGAIIMPHNIYLHSALVKSREVDRTRRGDVREANMYFLTEATIALFVSFIINLFVMAVFGQAFYQQTNEEAFNICANSSLHNYAKIFPRDNNTVSVDIYQGGVILGCLFGPAALYIWAVGLLAAGQSSTMTGTYAGQFVMEGFLKLRWSRFARVLLTRSCAILPTVLVAVFRDLRDLSGLNDLLNVLQSLLLPFAVLPILTFTSMPAVMQEFANGWLSKVITSCIMALVCAINLYFVISYLPSLPHPAYFGLVALLAIGYLGLTAYLAWTCCIAHGAKFLTHSSHQRFLYGLPIEEQEGREGSG.

Residues 1 to 36 are disordered; sequence MIRDKNPQRVNRPSYGSISSLPSPAPQPEPSRNTYL. Residues 1 to 39 lie on the Cytoplasmic side of the membrane; the sequence is MIRDKNPQRVNRPSYGSISSLPSPAPQPEPSRNTYLSEK. Residues 8–22 are compositionally biased toward polar residues; it reads QRVNRPSYGSISSLP. The chain crosses the membrane as a helical span at residues 40–60; it reads IPIPSTEQLLWVLLWATVLGL. At 61–123 the chain is on the extracellular side; it reads LCQRLAARLG…ISFNLLSAGR (63 aa). The chain crosses the membrane as a helical span at residues 124 to 144; it reads IPLWGGVLITIVDTFFFLFLD. The Cytoplasmic portion of the chain corresponds to 145–152; it reads NYGLRKLE. The helical transmembrane segment at 153–173 threads the bilayer; that stretch reads AFFGFLVTIMALTFGYEYVVA. Residues 174–199 are Extracellular-facing; sequence RPSQGALLKGLFLPSCPGCGQPELLQ. A helical membrane pass occupies residues 200–220; that stretch reads AVGIVGAIIMPHNIYLHSALV. Residues 221-245 are Cytoplasmic-facing; the sequence is KSREVDRTRRGDVREANMYFLTEAT. The helical transmembrane segment at 246–266 threads the bilayer; the sequence is IALFVSFIINLFVMAVFGQAF. Residues 267–305 are Extracellular-facing; it reads YQQTNEEAFNICANSSLHNYAKIFPRDNNTVSVDIYQGG. N-linked (GlcNAc...) asparagine glycans are attached at residues N280 and N294. A helical transmembrane segment spans residues 306–326; the sequence is VILGCLFGPAALYIWAVGLLA. At 327–353 the chain is on the cytoplasmic side; sequence AGQSSTMTGTYAGQFVMEGFLKLRWSR. Residues 354 to 374 traverse the membrane as a helical segment; it reads FARVLLTRSCAILPTVLVAVF. Over 375–391 the chain is Extracellular; it reads RDLRDLSGLNDLLNVLQ. A helical transmembrane segment spans residues 392–412; the sequence is SLLLPFAVLPILTFTSMPAVM. The Cytoplasmic segment spans residues 413–422; that stretch reads QEFANGWLSK. The helical transmembrane segment at 423 to 443 threads the bilayer; that stretch reads VITSCIMALVCAINLYFVISY. At 444–451 the chain is on the extracellular side; that stretch reads LPSLPHPA. A helical transmembrane segment spans residues 452-472; sequence YFGLVALLAIGYLGLTAYLAW. The Cytoplasmic portion of the chain corresponds to 473–507; it reads TCCIAHGAKFLTHSSHQRFLYGLPIEEQEGREGSG.

It belongs to the NRAMP family.

The protein resides in the late endosome membrane. The protein localises to the lysosome membrane. The catalysed reaction is Zn(2+)(in) + H(+)(out) = Zn(2+)(out) + H(+)(in). It catalyses the reaction Fe(2+)(in) + H(+)(out) = Fe(2+)(out) + H(+)(in). It carries out the reaction Mn(2+)(in) + H(+)(out) = Mn(2+)(out) + H(+)(in). Functionally, macrophage-specific antiporter that fluxes metal ions in either direction against a proton gradient. Localized to late endosomal lysosomal membranes, delivers bivalent cations from the cytosol into these acidic compartments where they may directly affect antimicrobial activity. Involved in iron metabolism and host natural resistance to infection with intracellular parasites. Pathogen resistance involves sequestration of Fe(2+) and Mn(2+), cofactors of both prokaryotic and eukaryotic catalases and superoxide dismutases, not only to protect the macrophage against its own generation of reactive oxygen species, but to deny the cations to the pathogen for synthesis of its protective enzymes. In Rattus norvegicus (Rat), this protein is Natural resistance-associated macrophage protein 1 (Slc11a1).